Here is a 63-residue protein sequence, read N- to C-terminus: Beta-defensin 3 (63 aa).

Positions 1–20 (MRIHYLLFSFLLVLLSPLSA) are cleaved as a signal peptide. Residues 21–22 (FS) constitute a propeptide that is removed on maturation. 3 disulfides stabilise this stretch: Cys31–Cys59, Cys38–Cys52, and Cys42–Cys60.

Belongs to the beta-defensin family.

The protein resides in the secreted. Has bactericidal activity. This Rattus norvegicus (Rat) protein is Beta-defensin 3 (Defb3).